Consider the following 52-residue polypeptide: Large ribosomal subunit protein bL33 (52 aa).

It belongs to the bacterial ribosomal protein bL33 family.

In Chlamydia trachomatis serovar A (strain ATCC VR-571B / DSM 19440 / HAR-13), this protein is Large ribosomal subunit protein bL33.